We begin with the raw amino-acid sequence, 314 residues long: tRNA dimethylallyltransferase (314 aa).

12–19 (GPTASGKT) contacts ATP. Substrate is bound at residue 14–19 (TASGKT). 2 interaction with substrate tRNA regions span residues 37-40 (DSAL) and 162-166 (QRIIR).

The protein belongs to the IPP transferase family. Monomer. Requires Mg(2+) as cofactor.

The enzyme catalyses adenosine(37) in tRNA + dimethylallyl diphosphate = N(6)-dimethylallyladenosine(37) in tRNA + diphosphate. In terms of biological role, catalyzes the transfer of a dimethylallyl group onto the adenine at position 37 in tRNAs that read codons beginning with uridine, leading to the formation of N6-(dimethylallyl)adenosine (i(6)A). In Acinetobacter baumannii (strain AB0057), this protein is tRNA dimethylallyltransferase.